The sequence spans 117 residues: MDKKSARLRRATRARKKISELAAHRLVINRTPRHIYAQLIAPCGSQVLAAASTVEADLRTTVKSTGNAEAAVAVGKAIAERAIEKGIKTVAFDRSGFKYHGRVKALADAAREAGLQF.

It belongs to the universal ribosomal protein uL18 family. Part of the 50S ribosomal subunit; part of the 5S rRNA/L5/L18/L25 subcomplex. Contacts the 5S and 23S rRNAs.

Its function is as follows. This is one of the proteins that bind and probably mediate the attachment of the 5S RNA into the large ribosomal subunit, where it forms part of the central protuberance. This is Large ribosomal subunit protein uL18 from Pseudoalteromonas atlantica (strain T6c / ATCC BAA-1087).